Consider the following 133-residue polypeptide: MEPISHLVKSSLPNYLSSLPVPDSIGGWFKLSFKDWLALIPPTVVVAGIGYTAYLAYCPAARASCSAKISGRCNNQIRKNEPKVVDMIDVEDIAEKAAFCRCWKTKNWPYCDGSHGEHNKQTGDNVGPIVIKK.

The Lumenal segment spans residues 1-35; that stretch reads MEPISHLVKSSLPNYLSSLPVPDSIGGWFKLSFKD. A helical membrane pass occupies residues 36–58; it reads WLALIPPTVVVAGIGYTAYLAYC. Topologically, residues 59–133 are cytoplasmic; sequence PAARASCSAK…DNVGPIVIKK (75 aa). 4 residues coordinate [2Fe-2S] cluster: Cys100, Cys102, Cys111, and His115.

The protein belongs to the CISD protein family. CISD2 subfamily. It depends on [2Fe-2S] cluster as a cofactor.

The protein resides in the endoplasmic reticulum membrane. The sequence is that of CDGSH iron-sulfur domain-containing protein 2 homolog from Drosophila sechellia (Fruit fly).